Consider the following 1364-residue polypeptide: Trifunctional purine biosynthetic protein adenosine-3 (1364 aa).

Residues 114–321 form the ATP-grasp domain; sequence KDFMLRHGIP…LFEVMQACCS (208 aa). 140-202 is an ATP binding site; the sequence is IRSAPYQALV…EELLEGEEIS (63 aa). Mn(2+)-binding residues include Glu291 and Asn293. Residues 435-1154 are AIRS; that stretch reads AIATAPGLSY…ARTQRMLSQP (720 aa). Residues 1155–1364 form a GART region; the sequence is RKRVAVLISG…EAPKDIKDSQ (210 aa). N(1)-(5-phospho-beta-D-ribosyl)glycinamide is bound at residue 1166–1168; that stretch reads GSN. (6R)-10-formyltetrahydrofolate is bound by residues Arg1221, 1246–1249, and Asn1263; that span reads MRIL. The Proton donor role is filled by His1265. 1297-1301 is a (6R)-10-formyltetrahydrofolate binding site; the sequence is DEGVD. 1327–1330 is a binding site for N(1)-(5-phospho-beta-D-ribosyl)glycinamide; the sequence is HYAE.

The protein in the N-terminal section; belongs to the GARS family. It in the central section; belongs to the AIR synthase family. This sequence in the C-terminal section; belongs to the GART family.

It carries out the reaction 5-phospho-beta-D-ribosylamine + glycine + ATP = N(1)-(5-phospho-beta-D-ribosyl)glycinamide + ADP + phosphate + H(+). The catalysed reaction is 2-formamido-N(1)-(5-O-phospho-beta-D-ribosyl)acetamidine + ATP = 5-amino-1-(5-phospho-beta-D-ribosyl)imidazole + ADP + phosphate + H(+). The enzyme catalyses N(1)-(5-phospho-beta-D-ribosyl)glycinamide + (6R)-10-formyltetrahydrofolate = N(2)-formyl-N(1)-(5-phospho-beta-D-ribosyl)glycinamide + (6S)-5,6,7,8-tetrahydrofolate + H(+). Its pathway is purine metabolism; IMP biosynthesis via de novo pathway; 5-amino-1-(5-phospho-D-ribosyl)imidazole from N(2)-formyl-N(1)-(5-phospho-D-ribosyl)glycinamide: step 2/2. The protein operates within purine metabolism; IMP biosynthesis via de novo pathway; N(1)-(5-phospho-D-ribosyl)glycinamide from 5-phospho-alpha-D-ribose 1-diphosphate: step 2/2. It functions in the pathway purine metabolism; IMP biosynthesis via de novo pathway; N(2)-formyl-N(1)-(5-phospho-D-ribosyl)glycinamide from N(1)-(5-phospho-D-ribosyl)glycinamide (10-formyl THF route): step 1/1. Trifunctional enzyme required for de novo purine biosynthesis. The sequence is that of Trifunctional purine biosynthetic protein adenosine-3 (ade3) from Drosophila pseudoobscura pseudoobscura (Fruit fly).